A 237-amino-acid polypeptide reads, in one-letter code: Cell division cycle-associated protein 4 (237 aa).

Positions 26 to 73 constitute an SERTA domain; the sequence is YSLQRQSLLDMSLVKLQLCHMLVEPNLCRSVLIANTVRQIQEEMSQDG.

Expressed preferentially in hematopoietic progenitors and mature blood cells. Expressed at low levels in the heart, lung, spleen, and thymus and at a higher level in muscle.

The protein localises to the nucleus. Functionally, may participate in the regulation of cell proliferation through the E2F/RB pathway. May be involved in molecular regulation of hematopoietic stem cells and progenitor cell lineage commitment and differentiation. The chain is Cell division cycle-associated protein 4 (Cdca4) from Mus musculus (Mouse).